Here is a 274-residue protein sequence, read N- to C-terminus: 23S rRNA (adenosine(1067)-2'-O)-methyltransferase (274 aa).

S-adenosyl-L-methionine contacts are provided by residues R165, L195, 218–220 (GSE), 238–240 (IPM), and 247–252 (LNVSVS).

Belongs to the class IV-like SAM-binding methyltransferase superfamily. RNA methyltransferase TsnR/AvirB family. As to quaternary structure, homodimer.

The catalysed reaction is adenosine(1067) in 23S rRNA + S-adenosyl-L-methionine = 2'-O-methyladenosine(1067) in 23S rRNA + S-adenosyl-L-homocysteine + H(+). Its function is as follows. Specifically methylates the adenosine-1067 in 23S ribosomal RNA. Confers resistance to antibiotic nosiheptide. This Streptomyces actuosus protein is 23S rRNA (adenosine(1067)-2'-O)-methyltransferase.